Here is a 540-residue protein sequence, read N- to C-terminus: NADH-quinone oxidoreductase subunit N (540 aa).

14 consecutive transmembrane segments (helical) span residues 24 to 44 (LSPM…EAFL), 54 to 74 (LVLA…LAGT), 88 to 108 (PTLF…LIIA), 158 to 178 (APGH…MLLF), 184 to 204 (LLTM…LCGL), 219 to 239 (YFLL…LLYG), 263 to 283 (ALIG…AVPF), 295 to 315 (PTPI…GAML), 331 to 351 (PVMW…AVTQ), 357 to 377 (MLAY…VAAN), 385 to 405 (MFYL…VTLV), 428 to 448 (VGGV…TSGF), 462 to 482 (GAVP…FFYV), and 505 to 525 (MFTA…GILP).

The protein belongs to the complex I subunit 2 family. In terms of assembly, NDH-1 is composed of 14 different subunits. Subunits NuoA, H, J, K, L, M, N constitute the membrane sector of the complex.

The protein resides in the cell membrane. The catalysed reaction is a quinone + NADH + 5 H(+)(in) = a quinol + NAD(+) + 4 H(+)(out). Functionally, NDH-1 shuttles electrons from NADH, via FMN and iron-sulfur (Fe-S) centers, to quinones in the respiratory chain. The immediate electron acceptor for the enzyme in this species is believed to be a menaquinone. Couples the redox reaction to proton translocation (for every two electrons transferred, four hydrogen ions are translocated across the cytoplasmic membrane), and thus conserves the redox energy in a proton gradient. The sequence is that of NADH-quinone oxidoreductase subunit N from Rhodococcus opacus (strain B4).